The chain runs to 214 residues: Thymidylate kinase (214 aa).

Residue 7 to 14 coordinates ATP; sequence GVDGAGKR. Residues Asp-9, Tyr-39, Phe-70, Arg-74, Arg-95, Asn-100, and Tyr-103 each contribute to the dTMP site. Mg(2+) is bound at residue Asp-9. The LID stretch occupies residues 147 to 159; that stretch reads GERSRGRAQRDPG. Positions 163 and 165 each coordinate dTMP. Glu-166 contacts Mg(2+).

The protein belongs to the thymidylate kinase family. As to quaternary structure, homodimer. Mg(2+) serves as cofactor.

The enzyme catalyses dTMP + ATP = dTDP + ADP. Its pathway is pyrimidine metabolism; dTTP biosynthesis. Its function is as follows. Catalyzes the reversible phosphorylation of deoxythymidine monophosphate (dTMP) to deoxythymidine diphosphate (dTDP), using ATP as its preferred phosphoryl donor. Situated at the junction of both de novo and salvage pathways of deoxythymidine triphosphate (dTTP) synthesis, is essential for DNA synthesis and cellular growth. This Mycobacterium tuberculosis (strain CDC 1551 / Oshkosh) protein is Thymidylate kinase (tmk).